Here is an 838-residue protein sequence, read N- to C-terminus: Alpha-glucan phosphorylase, H isozyme (838 aa).

Residues 1-21 are disordered; that stretch reads MEGGAKSNDVSAAPIAQPLSE. At Lys684 the chain carries N6-(pyridoxal phosphate)lysine.

This sequence belongs to the glycogen phosphorylase family. Pyridoxal 5'-phosphate is required as a cofactor.

It is found in the cytoplasm. The catalysed reaction is [(1-&gt;4)-alpha-D-glucosyl](n) + phosphate = [(1-&gt;4)-alpha-D-glucosyl](n-1) + alpha-D-glucose 1-phosphate. Functionally, phosphorylase is an important allosteric enzyme in carbohydrate metabolism. Enzymes from different sources differ in their regulatory mechanisms and in their natural substrates. However, all known phosphorylases share catalytic and structural properties. This Solanum tuberosum (Potato) protein is Alpha-glucan phosphorylase, H isozyme.